A 286-amino-acid chain; its full sequence is Probable xyloglucan endotransglucosylase/hydrolase protein 23 (286 aa).

The N-terminal stretch at methionine 1 to alanine 24 is a signal peptide. The GH16 domain occupies asparagine 25 to tyrosine 214. Glutamate 100 acts as the Nucleophile in catalysis. Glutamate 104 serves as the catalytic Proton donor. Glutamate 104 contributes to the xyloglucan binding site. Asparagine 108 carries N-linked (GlcNAc...) asparagine glycosylation. Xyloglucan is bound by residues histidine 117–asparagine 119, aspartate 127–glutamate 129, glutamate 193–tryptophan 194, and glycine 198. Residues cysteine 222 and cysteine 231 are joined by a disulfide bond. N-linked (GlcNAc...) asparagine glycosylation occurs at asparagine 233. A disulfide bridge connects residues cysteine 269 and cysteine 283. Residue arginine 274 participates in xyloglucan binding.

The protein belongs to the glycosyl hydrolase 16 family. XTH group 2 subfamily. Post-translationally, contains at least one intrachain disulfide bond essential for its enzymatic activity.

It localises to the secreted. The protein resides in the cell wall. It is found in the extracellular space. Its subcellular location is the apoplast. The enzyme catalyses breaks a beta-(1-&gt;4) bond in the backbone of a xyloglucan and transfers the xyloglucanyl segment on to O-4 of the non-reducing terminal glucose residue of an acceptor, which can be a xyloglucan or an oligosaccharide of xyloglucan.. In terms of biological role, catalyzes xyloglucan endohydrolysis (XEH) and/or endotransglycosylation (XET). Cleaves and religates xyloglucan polymers, an essential constituent of the primary cell wall, and thereby participates in cell wall construction of growing tissues. The protein is Probable xyloglucan endotransglucosylase/hydrolase protein 23 (XTH23) of Arabidopsis thaliana (Mouse-ear cress).